Here is a 430-residue protein sequence, read N- to C-terminus: tRNA(Ile)-lysidine synthase (430 aa).

An ATP-binding site is contributed by 21 to 26; that stretch reads SGGLDS.

Belongs to the tRNA(Ile)-lysidine synthase family.

The protein localises to the cytoplasm. The catalysed reaction is cytidine(34) in tRNA(Ile2) + L-lysine + ATP = lysidine(34) in tRNA(Ile2) + AMP + diphosphate + H(+). Ligates lysine onto the cytidine present at position 34 of the AUA codon-specific tRNA(Ile) that contains the anticodon CAU, in an ATP-dependent manner. Cytidine is converted to lysidine, thus changing the amino acid specificity of the tRNA from methionine to isoleucine. This chain is tRNA(Ile)-lysidine synthase, found in Salmonella dublin (strain CT_02021853).